The sequence spans 149 residues: Ribonuclease HI (149 aa).

The region spanning methionine 1 to leucine 140 is the RNase H type-1 domain. Residues aspartate 7, glutamate 52, aspartate 76, and aspartate 125 each contribute to the Mg(2+) site. Mn(2+) is bound by residues aspartate 7, glutamate 52, aspartate 76, and aspartate 125. Residues cysteine 58 and cysteine 145 are joined by a disulfide bond.

As to quaternary structure, monomer. The cofactor is Mn(2+). Requires Mg(2+) as cofactor. It depends on Co(2+) as a cofactor. Ni(2+) serves as cofactor. The disulfide bond confers considerable stability to the protein.

Its subcellular location is the cytoplasm. The catalysed reaction is Endonucleolytic cleavage to 5'-phosphomonoester.. Functionally, nuclease that specifically degrades the RNA of RNA-DNA hybrids. Endonucleolytically removes RNA primers from the Okazaki fragments of lagging strand synthesis on its own. In the presence of Mn(2+) or Co(2+) can also cleave an RNA-RNA hybrid; the dsRNase activity is 10- 100-fold lower than RNase H activity. Complements the temperature-sensitive phenotype of an E.coli double rnhA/rnhB (RNase H) disruption mutant. This is Ribonuclease HI (rnhA) from Sulfurisphaera tokodaii (strain DSM 16993 / JCM 10545 / NBRC 100140 / 7) (Sulfolobus tokodaii).